Reading from the N-terminus, the 1013-residue chain is Ephrin type-B receptor 6 (1013 aa).

A signal peptide spans 1-31 (MASENTAGSGSRVAGMVYSLWLLVLGPSVLA). At 32 to 590 (LEEVLLDTTG…LPEKLSLVIG (559 aa)) the chain is on the extracellular side. The 199-residue stretch at 33 to 231 (EEVLLDTTGE…FSYTCPSVLR (199 aa)) folds into the Eph LBD domain. 2 consecutive Fibronectin type-III domains span residues 363–478 (PPSA…TSHE) and 479–574 (VPSA…TLPQ). The N-linked (GlcNAc...) asparagine glycan is linked to Asn-472. Residues 591 to 611 (SILGALAFLLLAAITVLAVIF) form a helical membrane-spanning segment. Topologically, residues 612–1013 (QRKRRGTGYT…HLRQPGSVEV (402 aa)) are cytoplasmic. The Protein kinase domain occupies 662 to 911 (IKIEEVIGAG…QLVAAFDKMI (250 aa)). 668 to 676 (IGAGSFGEV) contacts ATP. The 65-residue stretch at 940-1004 (PCLDSPQAWL…LHNIQLLQQH (65 aa)) folds into the SAM domain. A PDZ-binding motif is present at residues 1011-1013 (VEV).

This sequence belongs to the protein kinase superfamily. Tyr protein kinase family. Ephrin receptor subfamily. As to quaternary structure, interacts with CBL and EPHB1. Interacts with FYN; this interaction takes place in a ligand-independent manner. In terms of processing, ligand-binding increases phosphorylation on tyrosine residues. Phosphorylation on tyrosine residues is mediated by transphosphorylation by the catalytically active EPHB1 in a ligand-independent manner. Tyrosine phosphorylation of the receptor may act as a switch on the functional transition from cell adhesion/attraction to de-adhesion/repulsion.

The protein resides in the membrane. Its function is as follows. Kinase-defective receptor for members of the ephrin-B family. Binds to ephrin-B1 and ephrin-B2. Modulates cell adhesion and migration by exerting both positive and negative effects upon stimulation with ephrin-B2. Inhibits JNK activation, T-cell receptor-induced IL-2 secretion and CD25 expression upon stimulation with ephrin-B2. This chain is Ephrin type-B receptor 6 (Ephb6), found in Rattus norvegicus (Rat).